Here is a 462-residue protein sequence, read N- to C-terminus: NAD-capped RNA hydrolase NUDT12 (462 aa).

ANK repeat units follow at residues 11-40 (EIVT…SLLN), 45-74 (NGWT…DRSI), and 78-98 (SRQT…ANLL). Lysine 185 is modified (N6-succinyllysine). Cysteine 284 and cysteine 287 together coordinate Zn(2+). Lysine 292 bears the N6-succinyllysine mark. Cysteine 302 and cysteine 307 together coordinate Zn(2+). Substrate contacts are provided by residues tyrosine 318, 354–356 (AGF), glutamate 370, glutamate 374, and glutamate 415. Positions 319-453 (PRVDPVVIMQ…SRAIAHQLIK (135 aa)) constitute a Nudix hydrolase domain. Mg(2+) contacts are provided by alanine 354, glutamate 370, glutamate 374, and glutamate 415. The Nudix box motif lies at 355-376 (GFIEPGETIEDAVRREVEEESG). Residues 460–462 (PNL) carry the Microbody targeting signal motif.

The protein belongs to the Nudix hydrolase family. NudC subfamily. As to quaternary structure, homodimer. Homodimerization is essential for its catalytic activity and protein stability. Interacts (via ANK repeats) with BLMH. The cofactor is Mg(2+). Zn(2+) is required as a cofactor.

It is found in the cytoplasm. It localises to the peroxisome. Its subcellular location is the cytoplasmic granule. It carries out the reaction a 5'-end NAD(+)-phospho-ribonucleoside in mRNA + H2O = a 5'-end phospho-adenosine-phospho-ribonucleoside in mRNA + beta-nicotinamide D-ribonucleotide + 2 H(+). The catalysed reaction is NAD(+) + H2O = beta-nicotinamide D-ribonucleotide + AMP + 2 H(+). The enzyme catalyses NADH + H2O = reduced beta-nicotinamide D-ribonucleotide + AMP + 2 H(+). It catalyses the reaction NADPH + H2O = reduced beta-nicotinamide D-ribonucleotide + adenosine 2',5'-bisphosphate + 2 H(+). MRNA decapping enzyme that specifically removes the nicotinamide adenine dinucleotide (NAD) cap from a subset of mRNAs by hydrolyzing the diphosphate linkage to produce nicotinamide mononucleotide (NMN) and 5' monophosphate mRNA. The NAD-cap is present at the 5'-end of some RNAs; in contrast to the canonical N7 methylguanosine (m7G) cap, the NAD cap promotes mRNA decay. Preferentially acts on NAD-capped transcripts in response to nutrient stress. Also acts on free nicotinamide adenine dinucleotide molecules: hydrolyzes NAD(H) into NMN(H) and AMP, and NADPH into NMNH and 2',5'-ADP. May act to regulate the concentration of peroxisomal nicotinamide nucleotide cofactors required for oxidative metabolism in this organelle. Regulates the levels of circadian clock components PER1, PER2, PER3 and CRY2 in the liver. The polypeptide is NAD-capped RNA hydrolase NUDT12 (Homo sapiens (Human)).